We begin with the raw amino-acid sequence, 37 residues long: Large ribosomal subunit protein bL36 (37 aa).

It belongs to the bacterial ribosomal protein bL36 family.

The chain is Large ribosomal subunit protein bL36 from Sulfurovum sp. (strain NBC37-1).